The following is a 474-amino-acid chain: Flotillin-like protein 3 (474 aa).

Residue C35 is the site of S-palmitoyl cysteine attachment. Coiled-coil stretches lie at residues 235–255 (ENQREAEVAEANSELAKKKAA) and 305–325 (QYETKVQEANWELYKKQKEAE).

The protein belongs to the band 7/mec-2 family. Flotillin subfamily. May be palmitoylated. Expressed in all plant organs. Primarily expressed in vascular tissues. No change in spatial expression in root upon inoculation. Expression limited to the nodule vascular tissue.

Its subcellular location is the cell membrane. It is found in the membrane. The protein resides in the caveola. In terms of biological role, may act as a scaffolding protein within caveolar membranes, functionally participating in formation of caveolae or caveolae-like vesicles. May be involved in nodule formation. This chain is Flotillin-like protein 3 (FLOT3), found in Medicago truncatula (Barrel medic).